The chain runs to 406 residues: Cysteine desulfurase (406 aa).

At Lys226 the chain carries N6-(pyridoxal phosphate)lysine. The Cysteine persulfide intermediate role is filled by Cys364.

This sequence belongs to the class-V pyridoxal-phosphate-dependent aminotransferase family. Csd subfamily. As to quaternary structure, homodimer. Interacts with SufE and the SufBCD complex composed of SufB, SufC and SufD. The interaction with SufE is required to mediate the direct transfer of the sulfur atom from the S-sulfanylcysteine. Pyridoxal 5'-phosphate serves as cofactor.

It localises to the cytoplasm. The catalysed reaction is (sulfur carrier)-H + L-cysteine = (sulfur carrier)-SH + L-alanine. It catalyses the reaction L-selenocysteine + AH2 = hydrogenselenide + L-alanine + A + H(+). It participates in cofactor biosynthesis; iron-sulfur cluster biosynthesis. Functionally, cysteine desulfurases mobilize the sulfur from L-cysteine to yield L-alanine, an essential step in sulfur metabolism for biosynthesis of a variety of sulfur-containing biomolecules. Component of the suf operon, which is activated and required under specific conditions such as oxidative stress and iron limitation. Acts as a potent selenocysteine lyase in vitro, that mobilizes selenium from L-selenocysteine. Selenocysteine lyase activity is however unsure in vivo. This is Cysteine desulfurase from Salmonella agona (strain SL483).